The primary structure comprises 161 residues: Probable ribosome biogenesis protein RLP24 (161 aa).

The protein belongs to the eukaryotic ribosomal protein eL24 family. In terms of assembly, associated with nucleolar and cytoplasmic pre-60S particles. At the end of biogenesis it dissociates from cytoplasmic pre-60S particles and is likely to be exchanged for its ribosomal homolog, RPL24.

It localises to the nucleus. Its subcellular location is the nucleolus. In terms of biological role, involved in the biogenesis of the 60S ribosomal subunit. Ensures the docking of GTPBP4/NOG1 to pre-60S particles. In Danio rerio (Zebrafish), this protein is Probable ribosome biogenesis protein RLP24 (rsl24d1).